Here is a 317-residue protein sequence, read N- to C-terminus: Periplasmic [NiFe] hydrogenase small subunit 1 (317 aa).

The segment at residues 1-49 (MRFSVGLGKEGAEERLARRGVSRRDFLKFCTAIAVTMGMGPAFAPEVAR) is a signal peptide (tat-type signal). 8 residues coordinate [4Fe-4S] cluster: cysteine 67, cysteine 70, cysteine 164, cysteine 200, histidine 238, cysteine 241, cysteine 266, and cysteine 272. Cysteine 281, cysteine 299, and cysteine 302 together coordinate [3Fe-4S] cluster.

The protein belongs to the [NiFe]/[NiFeSe] hydrogenase small subunit family. As to quaternary structure, heterodimer of a large and a small subunit. The cofactor is [3Fe-4S] cluster. Requires [4Fe-4S] cluster as cofactor. Post-translationally, predicted to be exported by the Tat system. The position of the signal peptide cleavage has not been experimentally proven.

It is found in the periplasm. It carries out the reaction 2 Fe(III)-[cytochrome c3] + H2 = 2 Fe(II)-[cytochrome c3] + 2 H(+). This chain is Periplasmic [NiFe] hydrogenase small subunit 1 (hynB1), found in Nitratidesulfovibrio vulgaris (strain ATCC 29579 / DSM 644 / CCUG 34227 / NCIMB 8303 / VKM B-1760 / Hildenborough) (Desulfovibrio vulgaris).